The chain runs to 106 residues: Replication protein A 14 kDa subunit (106 aa).

It belongs to the replication factor A protein 3 family. As to quaternary structure, component of the heterotrimeric canonical replication protein A complex (RPA). Interacts with RPA1B, RPA2A, RPA2B and RPA2C.

It is found in the nucleus. As part of the replication protein A (RPA/RP-A), a single-stranded DNA-binding heterotrimeric complex, may play an essential role in DNA replication, recombination and repair. Binds and stabilizes single-stranded DNA intermediates, preventing complementary DNA reannealing and recruiting different proteins involved in DNA metabolism. The chain is Replication protein A 14 kDa subunit (RPA3) from Oryza sativa subsp. japonica (Rice).